Consider the following 407-residue polypeptide: Accessory Sec system protein translocase subunit SecY2 (407 aa).

Transmembrane regions (helical) follow at residues 13 to 33, 65 to 85, 104 to 124, 133 to 153, 158 to 178, 190 to 210, 248 to 268, 287 to 307, 345 to 365, and 370 to 390; these read FLWTLFFLFIYVLGTKLTLPF, LFSVGLSPWMSSMLIWQMFAV, MLLTLVIALIQSVALVLNLPL, TTIMVLDTLVLMAGTYFLIWL, AAMGLGGSIMIVMASMIAYIP, ISSLWLALMLVFSLVFLYLAV, IMYAMTLVSIPQYFLLIIHFL, PAWFILYLLTIFILALAFAFI, FALVGAFYLILISGLPMMVVL, and YLRLSMIPGIFMIFIGMVFSI.

Belongs to the SecY/SEC61-alpha family. SecY2 subfamily. As to quaternary structure, component of the accessory SecA2/SecY2 protein translocase complex required to export cell wall proteins. May form heterotrimers with SecE and SecG subunits.

It is found in the cell membrane. In terms of biological role, part of the accessory SecA2/SecY2 system specifically required for export of possible cell wall proteins. The central subunit of a protein translocation channel. The protein is Accessory Sec system protein translocase subunit SecY2 of Streptococcus sanguinis (strain SK36).